The chain runs to 153 residues: Arginine regulator (153 aa).

It belongs to the ArgR family.

Its subcellular location is the cytoplasm. It participates in amino-acid degradation; L-arginine degradation via ADI pathway. Its function is as follows. Regulates the transcription of the arc operon, involved in arginine catabolism. The polypeptide is Arginine regulator (argR1) (Lactiplantibacillus plantarum (strain ATCC BAA-793 / NCIMB 8826 / WCFS1) (Lactobacillus plantarum)).